Reading from the N-terminus, the 126-residue chain is Late histone H2A.3, gonadal (126 aa).

Residues 1–18 are compositionally biased toward basic residues; that stretch reads MSGRGKGAKAKGKAKSRS. The segment at 1–21 is disordered; the sequence is MSGRGKGAKAKGKAKSRSSRA. Serine 2 bears the N-acetylserine mark. Serine 2 bears the Phosphoserine mark. Glutamine 104 carries the post-translational modification N5-methylglutamine. A Glycyl lysine isopeptide (Lys-Gly) (interchain with G-Cter in ubiquitin) cross-link involves residue lysine 119.

Belongs to the histone H2A family. The nucleosome is a histone octamer containing two molecules each of H2A, H2B, H3 and H4 assembled in one H3-H4 heterotetramer and two H2A-H2B heterodimers. The octamer wraps approximately 147 bp of DNA. Monoubiquitination of Lys-119 gives a specific tag for epigenetic transcriptional repression. In terms of processing, phosphorylation of Ser-2 directly represses transcription.

It localises to the nucleus. It is found in the chromosome. Its function is as follows. Core component of nucleosome. Nucleosomes wrap and compact DNA into chromatin, limiting DNA accessibility to the cellular machineries which require DNA as a template. Histones thereby play a central role in transcription regulation, DNA repair, DNA replication and chromosomal stability. DNA accessibility is regulated via a complex set of post-translational modifications of histones, also called histone code, and nucleosome remodeling. The chain is Late histone H2A.3, gonadal from Psammechinus miliaris (Green sea urchin).